The chain runs to 1305 residues: RNA-directed RNA polymerase (1305 aa).

A RdRp catalytic domain is found at 563–814 (IIVGDLEATG…KTLIAPFSVE (252 aa)).

This sequence belongs to the reoviridae RNA-directed RNA polymerase family.

The enzyme catalyses RNA(n) + a ribonucleoside 5'-triphosphate = RNA(n+1) + diphosphate. This chain is RNA-directed RNA polymerase (Segment-1), found in African horse sickness virus (AHSV).